A 681-amino-acid chain; its full sequence is Sodium-dependent phosphate transporter 1 (681 aa).

6 consecutive transmembrane segments (helical) span residues 25 to 45, 66 to 86, 106 to 126, 162 to 182, 207 to 227, and 234 to 254; these read YLWM…SVGA, ACIL…AKVS, LMAG…VASF, IVMS…ILFF, ACTV…LLGF, and GTIL…WFFV. A phosphoserine mark is found at S269 and S273. A disordered region spans residues 269-296; sequence SPSESPLMEKKNSLKEDHEETKLSVSDI. Positions 275 to 290 are enriched in basic and acidic residues; it reads LMEKKNSLKEDHEETK. Transmembrane regions (helical) follow at residues 515-535, 562-582, 604-624, and 654-674; these read VSLL…FAHG, VATP…GLWV, FSIE…GLPI, and IFMA…AIMA. Residues 554–562 form an a region; the sequence is DTGDVSSKV.

The protein belongs to the inorganic phosphate transporter (PiT) (TC 2.A.20) family.

It localises to the cell membrane. It carries out the reaction 2 Na(+)(out) + phosphate(out) = 2 Na(+)(in) + phosphate(in). In terms of biological role, sodium-phosphate symporter which preferentially transports the monovalent form of phosphate with a stoichiometry of two sodium ions per phosphate ion. May play a role in extracellular matrix and cartilage calcification as well as in vascular calcification. Essential for cell proliferation but this function is independent of its phosphate transporter activity. This Felis catus (Cat) protein is Sodium-dependent phosphate transporter 1 (Slc20a1).